The chain runs to 164 residues: MVLKTELCRFSGQKIYPGRGIRFIRSDSQVFLFLNSKCKRYFHNKLKPSKLCWTAMYRKQHKKDAAQEAVKRRRRATKKPYSRSIVGATLEVIQKKRAEKPEVRDAAREAALREIKERIKKTKDEKKAKKVEYASKQQKSQVKGNIPKSAAPKAAKMGGGGGRR.

Residues 117–133 (ERIKKTKDEKKAKKVEY) show a composition bias toward basic and acidic residues. The interval 117–164 (ERIKKTKDEKKAKKVEYASKQQKSQVKGNIPKSAAPKAAKMGGGGGRR) is disordered.

Belongs to the eukaryotic ribosomal protein eL24 family. In terms of assembly, interacts with the cauliflower mosaic virus transactivator TAV to form a TAV/60S complex. Interacts with REIL1 AND REIL2.

In terms of biological role, might have an extraribosomal function in reinitiation of translation. This is Large ribosomal subunit protein eL24z (RPL24A) from Arabidopsis thaliana (Mouse-ear cress).